The sequence spans 388 residues: 1-deoxy-D-xylulose 5-phosphate reductoisomerase (388 aa).

NADPH-binding residues include T15, G16, S17, I18, and N127. K128 contributes to the 1-deoxy-D-xylulose 5-phosphate binding site. Residue E129 coordinates NADPH. D153 lines the Mn(2+) pocket. The 1-deoxy-D-xylulose 5-phosphate site is built by S154, E155, S179, and H202. Residue E155 participates in Mn(2+) binding. Residue G208 coordinates NADPH. S215, N220, K221, and E224 together coordinate 1-deoxy-D-xylulose 5-phosphate. E224 contributes to the Mn(2+) binding site.

This sequence belongs to the DXR family. Requires Mg(2+) as cofactor. Mn(2+) is required as a cofactor.

It carries out the reaction 2-C-methyl-D-erythritol 4-phosphate + NADP(+) = 1-deoxy-D-xylulose 5-phosphate + NADPH + H(+). Its pathway is isoprenoid biosynthesis; isopentenyl diphosphate biosynthesis via DXP pathway; isopentenyl diphosphate from 1-deoxy-D-xylulose 5-phosphate: step 1/6. Catalyzes the NADPH-dependent rearrangement and reduction of 1-deoxy-D-xylulose-5-phosphate (DXP) to 2-C-methyl-D-erythritol 4-phosphate (MEP). In Bacteroides fragilis (strain ATCC 25285 / DSM 2151 / CCUG 4856 / JCM 11019 / LMG 10263 / NCTC 9343 / Onslow / VPI 2553 / EN-2), this protein is 1-deoxy-D-xylulose 5-phosphate reductoisomerase.